Consider the following 621-residue polypeptide: F-box/LRR-repeat protein 4 (621 aa).

An Asymmetric dimethylarginine modification is found at Arg-28. The F-box domain maps to 277-332 (NGYFDKLPYELIQLILNHLSLPDLCRLAQTCRLLHQHCCDPLQYIHLNLQPYWARL). 9 LRR repeats span residues 376–397 (ELVR…EVIS), 402–421 (NLQD…AFGH), 427–448 (SLKR…SILN), 452–474 (ELQH…ASMI), 480–501 (NLRT…AELA), 504–524 (CVLL…STGC), 532–558 (LPNL…ASNC), 559–583 (TRLQ…LLES), and 584–609 (CKDL…LNAS).

As to quaternary structure, part of a SCF (SKP1-CUL1-F-box) protein ligase complex. Interacts with FAF2 and VCP. Interacts with PPTC7; this interaction promotes destruction of BNIP3 and NIX and mitophagy suppression.

The protein localises to the cytoplasm. It is found in the nucleus. The protein resides in the mitochondrion outer membrane. Functionally, substrate-recognition component of the mitochondria-localized SCF-FBXL4 ubiquitin E3 ligase complex that plays a role in the restriction of mitophagy by controlling the degradation of BNIP3 and NIX mitophagy receptors. Also rescues mitochondrial injury through reverting hyperactivation of DRP1-mediated mitochondrial fission. In Mus musculus (Mouse), this protein is F-box/LRR-repeat protein 4 (Fbxl4).